Consider the following 430-residue polypeptide: POU domain, class 2, transcription factor 3 (430 aa).

Disordered regions lie at residues 1 to 40, 60 to 81, 129 to 180, and 248 to 267; these read MVNLEPMHTEIKMSGDVADSTDARSTFGQVESGNDRNGLD, HRPCHLSQGPTMMPGNQMSGDM, LLLP…EPTD, and DAESSPSDPSASTPSSYPTL. Polar residues-rich tracts occupy residues 23–32 and 67–78; these read ARSTFGQVES and QGPTMMPGNQMS. Low complexity predominate over residues 129–139; sequence LLLPQTGPGLT. In terms of domain architecture, POU-specific spans 176–250; sequence DEPTDLEELE…LLEKWLNDAE (75 aa). Over residues 251–267 the composition is skewed to low complexity; the sequence is SSPSDPSASTPSSYPTL. The segment at residues 274–333 is a DNA-binding region (homeobox); it reads KRKKRTSIETNIRLTLEKRFQDNPKPSSEEISMIAEQLSMEKEVVRVWFCNRRQKEKRIN. 2 stretches are compositionally biased toward low complexity: residues 355–364 and 374–390; these read SLGSLSVPPV and SSCSPGNNSRPSSPGSG. The tract at residues 355–413 is disordered; the sequence is SLGSLSVPPVHSTMPGTVTSSCSPGNNSRPSSPGSGLHASSPTASQNNSKAAMNPSSAA. Residues 392-413 show a composition bias toward polar residues; it reads HASSPTASQNNSKAAMNPSSAA.

The protein belongs to the POU transcription factor family. Class-2 subfamily. In terms of assembly, interacts (via the POU domain) with POU2AF1 and POU2AF2 in a DNA-dependent manner; this interaction recruits POU2AF2 to chromatin and increases POU2F3 transactivation activity. As to expression, expressed in epidermis and hair follicles.

It localises to the nucleus. Transcription factor that binds to the octamer motif (5'-ATTTGCAT-3') and regulates cell type-specific differentiation pathways. Involved in the regulation of keratinocytes differentiation. The POU2F3-POU2AF2/POU2AF3 complex drives the expression of tuft-cell-specific genes, a rare chemosensory cells that coordinate immune and neural functions within mucosal epithelial tissues. Functionally, inhibits transactivation by POU2F1. This chain is POU domain, class 2, transcription factor 3 (Pou2f3), found in Rattus norvegicus (Rat).